The primary structure comprises 352 residues: Photosystem II D2 protein (352 aa).

The helical transmembrane segment at 40–60 threads the bilayer; that stretch reads CAYLALGGWLTGTSFVTSWYT. Position 117 (His-117) interacts with chlorophyll a. A helical transmembrane segment spans residues 124-140; sequence GFMLRQFEIARLVGVRP. The pheophytin a site is built by Gln-129 and Asn-142. Residues 152 to 165 form a helical membrane-spanning segment; sequence VFVSVFLMYPLGQS. His-197 contributes to the chlorophyll a binding site. The chain crosses the membrane as a helical span at residues 207–227; the sequence is GALLCAIHGATVENTLFEDSE. A plastoquinone is bound by residues His-214 and Phe-261. His-214 is a binding site for Fe cation. His-268 serves as a coordination point for Fe cation. Residues 278 to 294 traverse the membrane as a helical segment; the sequence is GLWMSSIGIVGLALNLR.

Belongs to the reaction center PufL/M/PsbA/D family. As to quaternary structure, PSII is composed of 1 copy each of membrane proteins PsbA, PsbB, PsbC, PsbD, PsbE, PsbF, PsbH, PsbI, PsbJ, PsbK, PsbL, PsbM, PsbT, PsbX, PsbY, PsbZ, Psb30/Ycf12, peripheral proteins PsbO, CyanoQ (PsbQ), PsbU, PsbV and a large number of cofactors. It forms dimeric complexes. Requires The D1/D2 heterodimer binds P680, chlorophylls that are the primary electron donor of PSII, and subsequent electron acceptors. It shares a non-heme iron and each subunit binds pheophytin, quinone, additional chlorophylls, carotenoids and lipids. There is also a Cl(-1) ion associated with D1 and D2, which is required for oxygen evolution. The PSII complex binds additional chlorophylls, carotenoids and specific lipids. as cofactor.

The protein localises to the cellular thylakoid membrane. It catalyses the reaction 2 a plastoquinone + 4 hnu + 2 H2O = 2 a plastoquinol + O2. In terms of biological role, photosystem II (PSII) is a light-driven water:plastoquinone oxidoreductase that uses light energy to abstract electrons from H(2)O, generating O(2) and a proton gradient subsequently used for ATP formation. It consists of a core antenna complex that captures photons, and an electron transfer chain that converts photonic excitation into a charge separation. The D1/D2 (PsbA/PsbD) reaction center heterodimer binds P680, the primary electron donor of PSII as well as several subsequent electron acceptors. D2 is needed for assembly of a stable PSII complex. This chain is Photosystem II D2 protein, found in Synechococcus elongatus (strain ATCC 33912 / PCC 7942 / FACHB-805) (Anacystis nidulans R2).